The chain runs to 485 residues: N-succinylglutamate 5-semialdehyde dehydrogenase (485 aa).

220–225 (GSANTG) provides a ligand contact to NAD(+). Catalysis depends on residues Glu243 and Cys278.

Belongs to the aldehyde dehydrogenase family. AstD subfamily.

The catalysed reaction is N-succinyl-L-glutamate 5-semialdehyde + NAD(+) + H2O = N-succinyl-L-glutamate + NADH + 2 H(+). It participates in amino-acid degradation; L-arginine degradation via AST pathway; L-glutamate and succinate from L-arginine: step 4/5. Its function is as follows. Catalyzes the NAD-dependent reduction of succinylglutamate semialdehyde into succinylglutamate. The protein is N-succinylglutamate 5-semialdehyde dehydrogenase of Vibrio parahaemolyticus serotype O3:K6 (strain RIMD 2210633).